The chain runs to 88 residues: Putative septation protein SpoVG (88 aa).

This sequence belongs to the SpoVG family.

Functionally, could be involved in septation. The chain is Putative septation protein SpoVG from Caldicellulosiruptor bescii (strain ATCC BAA-1888 / DSM 6725 / KCTC 15123 / Z-1320) (Anaerocellum thermophilum).